A 126-amino-acid polypeptide reads, in one-letter code: Probable S-adenosyl-L-methionine-binding protein MJ1583 (126 aa).

Positions 4–126 constitute a TsaA-like domain; sequence LKPIGVVEQN…FSEKLDCPKI (123 aa). S-adenosyl-L-methionine-binding positions include 45–46, arginine 75, and 106–109; these read HK and YNET.

The protein belongs to the tRNA methyltransferase O family.

The sequence is that of Probable S-adenosyl-L-methionine-binding protein MJ1583 from Methanocaldococcus jannaschii (strain ATCC 43067 / DSM 2661 / JAL-1 / JCM 10045 / NBRC 100440) (Methanococcus jannaschii).